The sequence spans 303 residues: Signal recognition particle receptor FtsY (303 aa).

GTP is bound by residues 108–115, 190–194, and 254–257; these read GVNGAGKT, DTAGR, and TKLD.

Belongs to the GTP-binding SRP family. FtsY subfamily. As to quaternary structure, part of the signal recognition particle protein translocation system, which is composed of SRP and FtsY. SRP is a ribonucleoprotein composed of Ffh and a 4.5S RNA molecule.

It localises to the cell inner membrane. It is found in the cytoplasm. It carries out the reaction GTP + H2O = GDP + phosphate + H(+). Involved in targeting and insertion of nascent membrane proteins into the cytoplasmic membrane. Acts as a receptor for the complex formed by the signal recognition particle (SRP) and the ribosome-nascent chain (RNC). Interaction with SRP-RNC leads to the transfer of the RNC complex to the Sec translocase for insertion into the membrane, the hydrolysis of GTP by both Ffh and FtsY, and the dissociation of the SRP-FtsY complex into the individual components. This is Signal recognition particle receptor FtsY from Rickettsia felis (strain ATCC VR-1525 / URRWXCal2) (Rickettsia azadi).